A 294-amino-acid polypeptide reads, in one-letter code: Ribosomal protein L11 methyltransferase (294 aa).

Residues T147, G169, D191, and N231 each contribute to the S-adenosyl-L-methionine site.

This sequence belongs to the methyltransferase superfamily. PrmA family.

Its subcellular location is the cytoplasm. The catalysed reaction is L-lysyl-[protein] + 3 S-adenosyl-L-methionine = N(6),N(6),N(6)-trimethyl-L-lysyl-[protein] + 3 S-adenosyl-L-homocysteine + 3 H(+). Methylates ribosomal protein L11. The chain is Ribosomal protein L11 methyltransferase from Dichelobacter nodosus (strain VCS1703A).